Here is a 133-residue protein sequence, read N- to C-terminus: DNA-directed RNA polymerases I and III subunit RPAC2 (133 aa).

Position 1 is an N-acetylmethionine (M1).

It belongs to the archaeal Rpo11/eukaryotic RPB11/RPC19 RNA polymerase subunit family. As to quaternary structure, component of the RNA polymerase I and RNA polymerase III complexes consisting of at least 13 and 17 subunits, respectively. Pol I complex consists of a ten-subunit catalytic core composed of POLR1A/RPA1, POLR1B/RPA2, POLR1C/RPAC1, POLR1D/RPAC2, POLR1H/RPA12, POLR2E/RPABC1, POLR2F/RPABC2, POLR2H/RPABC3, POLR2K/RPABC4 and POLR2L/RPABC5; a mobile stalk subunit POLR1F/RPA43 protruding from the core and additional subunits homologous to general transcription factors POLR1E/RPA49 and POLR1G/RPA34. Part of Pol I pre-initiation complex (PIC), in which Pol I core assembles with RRN3 and promoter-bound UTBF and SL1/TIF-IB complex. Pol III complex consists of a ten-subunit catalytic core composed of POLR3A/RPC1, POLR3B/RPC2, POLR1C/RPAC1, POLR1D/RPAC2, POLR3K/RPC10, POLR2E/RPABC1, POLR2F/RPABC2, POLR2H/RPABC3, POLR2K/RPABC4 and POLR2L/RPABC5; a mobile stalk composed of two subunits POLR3H/RPC8 and CRCP/RPC9, protruding from the core and functioning primarily in transcription initiation; and additional subunits homologous to general transcription factors of the RNA polymerase II machinery, POLR3C/RPC3-POLR3F/RPC6-POLR3G/RPC7 heterotrimer required for transcription initiation and POLR3D/RPC4-POLR3E/RPC5 heterodimer involved in both transcription initiation and termination.

It localises to the nucleus. The protein localises to the nucleolus. Functionally, DNA-dependent RNA polymerase catalyzes the transcription of DNA into RNA using the four ribonucleoside triphosphates as substrates. Common component of RNA polymerases I and III which synthesize ribosomal RNA precursors and short non-coding RNAs including 5S rRNA, snRNAs, tRNAs and miRNAs, respectively. The sequence is that of DNA-directed RNA polymerases I and III subunit RPAC2 from Homo sapiens (Human).